The following is a 203-amino-acid chain: High frequency lysogenization protein HflD homolog (203 aa).

Belongs to the HflD family.

Its subcellular location is the cytoplasm. It localises to the cell inner membrane. The polypeptide is High frequency lysogenization protein HflD homolog (Histophilus somni (strain 2336) (Haemophilus somnus)).